The sequence spans 343 residues: Selenide, water dikinase (343 aa).

The active site involves selenocysteine 16. Selenocysteine 16 is a non-standard amino acid (selenocysteine). Residues lysine 19 and 46-48 (GAE) each bind ATP. Aspartate 49 serves as a coordination point for Mg(2+). ATP is bound by residues aspartate 66, aspartate 89, and 137 to 139 (GHT). Residue aspartate 89 coordinates Mg(2+). Aspartate 225 lines the Mg(2+) pocket.

This sequence belongs to the selenophosphate synthase 1 family. Class I subfamily. Homodimer. The cofactor is Mg(2+).

The enzyme catalyses hydrogenselenide + ATP + H2O = selenophosphate + AMP + phosphate + 2 H(+). Synthesizes selenophosphate from selenide and ATP. The protein is Selenide, water dikinase of Citrifermentans bemidjiense (strain ATCC BAA-1014 / DSM 16622 / JCM 12645 / Bem) (Geobacter bemidjiensis).